A 20-amino-acid chain; its full sequence is Equinatoxin-1 (20 aa).

Residues 3–12 (AVAGAVIEGA) are plays an important role in the hemolytic activity. An N-terminal region region spans residues 11–20 (GASLTFNVLQ).

This sequence belongs to the actinoporin family. Sea anemone subfamily. In terms of assembly, octamer or nonamer in membranes. Monomer in the soluble state.

The protein resides in the secreted. The protein localises to the nematocyst. It localises to the target cell membrane. In terms of biological role, pore-forming protein that forms cations-selective hydrophilic pores of around 1 nm and causes cardiac stimulation and cytolysis. Pore formation is a multi-step process that involves specific recognition of membrane sphingomyelin (but neither cholesterol nor phosphatidylcholine) using aromatic rich region and adjacent phosphocholine (POC) binding site, firm binding to the membrane (mainly driven by hydrophobic interactions) accompanied by the transfer of the N-terminal region to the lipid-water interface and finally pore formation after oligomerization of monomers. Cytolytic effects include red blood cells hemolysis, platelet aggregation and lysis, cytotoxic and cytostatic effects on fibroblasts. Lethality in mammals has been ascribed to severe vasospasm of coronary vessels, cardiac arrhythmia, and inotropic effects. This Actinia equina (Beadlet anemone) protein is Equinatoxin-1.